The primary structure comprises 340 residues: Trimethylamine N-oxide transport system ATP-binding protein TmoW (340 aa).

The 237-residue stretch at 32-268 folds into the ABC transporter domain; it reads GRSFDDIRAD…PTTGYVAKFT (237 aa). Residue 64-71 coordinates ATP; it reads GLSGSGKS.

It belongs to the ABC transporter superfamily. The complex is probably composed of two ATP-binding proteins (TmoW), two transmembrane proteins (TmoV) and a solute-binding protein (TmoX).

It localises to the cell inner membrane. It catalyses the reaction a quaternary ammonium(out) + ATP + H2O = a quaternary ammonium(in) + ADP + phosphate + H(+). Its function is as follows. Part of the ABC transporter complex TmoXWV involved in trimethylamine N-oxide (TMAO) import. Responsible for energy coupling to the transport system. Is specific for TMAO and essential for TMAO metabolism. The sequence is that of Trimethylamine N-oxide transport system ATP-binding protein TmoW from Ruegeria pomeroyi (strain ATCC 700808 / DSM 15171 / DSS-3) (Silicibacter pomeroyi).